The sequence spans 205 residues: MATETLVELAAYLKEKLGDKLEESALAFGELTIVSRLDAIIDVLMFIRDDSRCQFINIIDISGVDYPARDKRFDVSYQLLSPFQNLRLRVKVRTDEDVPVPSVCSVYPGAEWYERETYDMYGILFSGHPDLRRILTDYGFEGHPLRKDFPVTGFVECRYDNEAKRVIYEPVVLRQEMRNFDFLSPWEGADYVLPCDKKAKGNGDK.

The protein belongs to the complex I 30 kDa subunit family. NDH-1 is composed of 14 different subunits. Subunits NuoB, C, D, E, F, and G constitute the peripheral sector of the complex.

The protein resides in the cell inner membrane. It carries out the reaction a quinone + NADH + 5 H(+)(in) = a quinol + NAD(+) + 4 H(+)(out). Functionally, NDH-1 shuttles electrons from NADH, via FMN and iron-sulfur (Fe-S) centers, to quinones in the respiratory chain. The immediate electron acceptor for the enzyme in this species is believed to be ubiquinone. Couples the redox reaction to proton translocation (for every two electrons transferred, four hydrogen ions are translocated across the cytoplasmic membrane), and thus conserves the redox energy in a proton gradient. In Bartonella bacilliformis (strain ATCC 35685 / KC583 / Herrer 020/F12,63), this protein is NADH-quinone oxidoreductase subunit C.